Consider the following 643-residue polypeptide: Phosphomethylpyrimidine synthase (643 aa).

Substrate is bound by residues Asn221, Met250, Tyr279, His315, 335–337 (SRG), 376–379 (DGLR), and Glu415. His419 contacts Zn(2+). Tyr442 is a binding site for substrate. His483 is a Zn(2+) binding site. [4Fe-4S] cluster is bound by residues Cys563, Cys566, and Cys571.

Belongs to the ThiC family. In terms of assembly, homodimer. Requires [4Fe-4S] cluster as cofactor.

The enzyme catalyses 5-amino-1-(5-phospho-beta-D-ribosyl)imidazole + S-adenosyl-L-methionine = 4-amino-2-methyl-5-(phosphooxymethyl)pyrimidine + CO + 5'-deoxyadenosine + formate + L-methionine + 3 H(+). It participates in cofactor biosynthesis; thiamine diphosphate biosynthesis. Catalyzes the synthesis of the hydroxymethylpyrimidine phosphate (HMP-P) moiety of thiamine from aminoimidazole ribotide (AIR) in a radical S-adenosyl-L-methionine (SAM)-dependent reaction. The protein is Phosphomethylpyrimidine synthase of Nitrobacter hamburgensis (strain DSM 10229 / NCIMB 13809 / X14).